We begin with the raw amino-acid sequence, 567 residues long: Urease subunit alpha (567 aa).

Residues histidine 134, histidine 136, and lysine 217 each coordinate Ni(2+). Lysine 217 carries the N6-carboxylysine modification. Histidine 219 is a substrate binding site. Residues histidine 246 and histidine 272 each contribute to the Ni(2+) site. The Proton donor role is filled by histidine 320. Aspartate 360 is a Ni(2+) binding site.

It belongs to the metallo-dependent hydrolases superfamily. Urease alpha subunit family. As to quaternary structure, heterotrimer of UreA (gamma), UreB (beta) and UreC (alpha) subunits. Three heterotrimers associate to form the active enzyme. Ni cation serves as cofactor. Post-translationally, carboxylation allows a single lysine to coordinate two nickel ions.

It is found in the cytoplasm. The catalysed reaction is urea + 2 H2O + H(+) = hydrogencarbonate + 2 NH4(+). It participates in nitrogen metabolism; urea degradation; CO(2) and NH(3) from urea (urease route): step 1/1. The polypeptide is Urease subunit alpha (Polynucleobacter asymbioticus (strain DSM 18221 / CIP 109841 / QLW-P1DMWA-1) (Polynucleobacter necessarius subsp. asymbioticus)).